The following is a 378-amino-acid chain: Erythronate-4-phosphate dehydrogenase (378 aa).

Substrate is bound by residues Ser-45 and Thr-66. NAD(+) contacts are provided by Asp-146 and Thr-175. Arg-208 is an active-site residue. An NAD(+)-binding site is contributed by Asp-232. Glu-237 is an active-site residue. His-254 (proton donor) is an active-site residue. Gly-257 contributes to the NAD(+) binding site. Residue Tyr-258 participates in substrate binding.

The protein belongs to the D-isomer specific 2-hydroxyacid dehydrogenase family. PdxB subfamily. In terms of assembly, homodimer.

It is found in the cytoplasm. It carries out the reaction 4-phospho-D-erythronate + NAD(+) = (R)-3-hydroxy-2-oxo-4-phosphooxybutanoate + NADH + H(+). It functions in the pathway cofactor biosynthesis; pyridoxine 5'-phosphate biosynthesis; pyridoxine 5'-phosphate from D-erythrose 4-phosphate: step 2/5. In terms of biological role, catalyzes the oxidation of erythronate-4-phosphate to 3-hydroxy-2-oxo-4-phosphonooxybutanoate. The chain is Erythronate-4-phosphate dehydrogenase from Escherichia coli O81 (strain ED1a).